Here is a 376-residue protein sequence, read N- to C-terminus: Queuine tRNA-ribosyltransferase (376 aa).

The active-site Proton acceptor is the Asp89. Residues 89-93 (DSGGF), Asp143, Gln194, and Gly221 contribute to the substrate site. Residues 252 to 258 (GVGIPSN) form an RNA binding region. The active-site Nucleophile is the Asp271. Residues 276-280 (ARNGR) are RNA binding; important for wobble base 34 recognition. Zn(2+) is bound by residues Cys309, Cys311, Cys314, and His340.

The protein belongs to the queuine tRNA-ribosyltransferase family. Homodimer. Within each dimer, one monomer is responsible for RNA recognition and catalysis, while the other monomer binds to the replacement base PreQ1. Zn(2+) serves as cofactor.

It catalyses the reaction 7-aminomethyl-7-carbaguanine + guanosine(34) in tRNA = 7-aminomethyl-7-carbaguanosine(34) in tRNA + guanine. It functions in the pathway tRNA modification; tRNA-queuosine biosynthesis. Catalyzes the base-exchange of a guanine (G) residue with the queuine precursor 7-aminomethyl-7-deazaguanine (PreQ1) at position 34 (anticodon wobble position) in tRNAs with GU(N) anticodons (tRNA-Asp, -Asn, -His and -Tyr). Catalysis occurs through a double-displacement mechanism. The nucleophile active site attacks the C1' of nucleotide 34 to detach the guanine base from the RNA, forming a covalent enzyme-RNA intermediate. The proton acceptor active site deprotonates the incoming PreQ1, allowing a nucleophilic attack on the C1' of the ribose to form the product. After dissociation, two additional enzymatic reactions on the tRNA convert PreQ1 to queuine (Q), resulting in the hypermodified nucleoside queuosine (7-(((4,5-cis-dihydroxy-2-cyclopenten-1-yl)amino)methyl)-7-deazaguanosine). This is Queuine tRNA-ribosyltransferase from Clostridium botulinum (strain Kyoto / Type A2).